We begin with the raw amino-acid sequence, 346 residues long: Phosphate acyltransferase (346 aa).

Belongs to the PlsX family. Homodimer. Probably interacts with PlsY.

The protein resides in the cytoplasm. The catalysed reaction is a fatty acyl-[ACP] + phosphate = an acyl phosphate + holo-[ACP]. Its pathway is lipid metabolism; phospholipid metabolism. In terms of biological role, catalyzes the reversible formation of acyl-phosphate (acyl-PO(4)) from acyl-[acyl-carrier-protein] (acyl-ACP). This enzyme utilizes acyl-ACP as fatty acyl donor, but not acyl-CoA. This Geobacter sulfurreducens (strain ATCC 51573 / DSM 12127 / PCA) protein is Phosphate acyltransferase.